Here is a 397-residue protein sequence, read N- to C-terminus: Acetyl-CoA acetyltransferase, cytosolic (397 aa).

Methionine 1 bears the N-acetylmethionine mark. The active-site Acyl-thioester intermediate is the cysteine 92. N6-acetyllysine is present on lysine 200. 2 residues coordinate CoA: arginine 223 and serine 226. Lysine 233 and lysine 235 each carry N6-acetyllysine. Residue serine 252 participates in CoA binding. Cysteine 383 functions as the Proton donor/acceptor in the catalytic mechanism.

This sequence belongs to the thiolase-like superfamily. Thiolase family. As to quaternary structure, homotetramer.

The protein localises to the cytoplasm. Its subcellular location is the cytosol. The enzyme catalyses 2 acetyl-CoA = acetoacetyl-CoA + CoA. Its pathway is lipid metabolism; fatty acid metabolism. Functionally, involved in the biosynthetic pathway of cholesterol. The protein is Acetyl-CoA acetyltransferase, cytosolic (ACAT2) of Homo sapiens (Human).